We begin with the raw amino-acid sequence, 633 residues long: Probable methyltransferase PMT17 (633 aa).

Residues 1-18 are Cytoplasmic-facing; sequence MAKENSGHHHQTEARRKK. The helical; Signal-anchor for type II membrane protein transmembrane segment at 19 to 39 threads the bilayer; it reads LTLILGVSGLCILFYVLGAWQ. Residues 40 to 633 lie on the Lumenal side of the membrane; the sequence is ANTVPSSISK…NNNNNNNNNN (594 aa). The segment at 50 to 71 is disordered; the sequence is LGCETQSNPSSSSSSSSSSESA. Low complexity predominate over residues 59-70; sequence SSSSSSSSSSES. A glycan (N-linked (GlcNAc...) asparagine) is linked at N87.

Belongs to the methyltransferase superfamily.

The protein localises to the endoplasmic reticulum membrane. The polypeptide is Probable methyltransferase PMT17 (Arabidopsis thaliana (Mouse-ear cress)).